The primary structure comprises 894 residues: Leucine--tRNA ligase, mitochondrial (894 aa).

The transit peptide at 1–9 (MLPRPSSRF) directs the protein to the mitochondrion. Positions 56 to 66 (PYPSGVLHIGH) match the 'HIGH' region motif. The 'KMSKS' region motif lies at 646-650 (KMSKS). Residue Lys-649 participates in ATP binding.

The protein belongs to the class-I aminoacyl-tRNA synthetase family.

The protein localises to the mitochondrion matrix. The enzyme catalyses tRNA(Leu) + L-leucine + ATP = L-leucyl-tRNA(Leu) + AMP + diphosphate. In Saccharomyces paradoxus (Yeast), this protein is Leucine--tRNA ligase, mitochondrial (NAM2).